The primary structure comprises 774 residues: Phosphoribosylformylglycinamidine synthase subunit PurL (774 aa).

Histidine 51 is an active-site residue. 2 residues coordinate ATP: tyrosine 54 and lysine 93. Glutamate 95 contacts Mg(2+). Substrate-binding positions include 96 to 99 and arginine 118; that span reads SHNH. Histidine 97 (proton acceptor) is an active-site residue. Residue aspartate 119 coordinates Mg(2+). A substrate-binding site is contributed by glutamine 242. Aspartate 270 lines the Mg(2+) pocket. 314–316 lines the substrate pocket; sequence ESQ. The ATP site is built by aspartate 514 and glycine 551. Asparagine 552 is a Mg(2+) binding site. Residue serine 554 participates in substrate binding.

The protein belongs to the FGAMS family. As to quaternary structure, monomer. Part of the FGAM synthase complex composed of 1 PurL, 1 PurQ and 2 PurS subunits.

Its subcellular location is the cytoplasm. The catalysed reaction is N(2)-formyl-N(1)-(5-phospho-beta-D-ribosyl)glycinamide + L-glutamine + ATP + H2O = 2-formamido-N(1)-(5-O-phospho-beta-D-ribosyl)acetamidine + L-glutamate + ADP + phosphate + H(+). Its pathway is purine metabolism; IMP biosynthesis via de novo pathway; 5-amino-1-(5-phospho-D-ribosyl)imidazole from N(2)-formyl-N(1)-(5-phospho-D-ribosyl)glycinamide: step 1/2. Its function is as follows. Part of the phosphoribosylformylglycinamidine synthase complex involved in the purines biosynthetic pathway. Catalyzes the ATP-dependent conversion of formylglycinamide ribonucleotide (FGAR) and glutamine to yield formylglycinamidine ribonucleotide (FGAM) and glutamate. The FGAM synthase complex is composed of three subunits. PurQ produces an ammonia molecule by converting glutamine to glutamate. PurL transfers the ammonia molecule to FGAR to form FGAM in an ATP-dependent manner. PurS interacts with PurQ and PurL and is thought to assist in the transfer of the ammonia molecule from PurQ to PurL. In Gloeobacter violaceus (strain ATCC 29082 / PCC 7421), this protein is Phosphoribosylformylglycinamidine synthase subunit PurL.